The chain runs to 86 residues: RNA-binding protein Hfq (86 aa).

The 60-residue stretch at 9–68 (DPYLNTLRKERVPVSIYLVNGIKLQGQIESFDQFVILLKNTVSQMVYKHAISTVVPSRPV) folds into the Sm domain. Residues 66-86 (RPVRLPSAGDSEQADAEPGNA) form a disordered region.

Belongs to the Hfq family. Homohexamer.

In terms of biological role, RNA chaperone that binds small regulatory RNA (sRNAs) and mRNAs to facilitate mRNA translational regulation in response to envelope stress, environmental stress and changes in metabolite concentrations. Also binds with high specificity to tRNAs. The protein is RNA-binding protein Hfq of Ectopseudomonas mendocina (strain ymp) (Pseudomonas mendocina).